A 468-amino-acid polypeptide reads, in one-letter code: Glutathione reductase (468 aa).

Residues S17 and G18 each contribute to the FAD site. Residue S17 participates in glutathione binding. R24 is a binding site for glutathione. Positions 38, 45, 46, and 54 each coordinate FAD. A disulfide bond links C46 and C51. Y103 provides a ligand contact to glutathione. A119 serves as a coordination point for FAD. NADP(+) is bound by residues A185, I188, E191, R208, R214, and G276. D317 provides a ligand contact to FAD. NADP(+) is bound at residue E323. Residue T325 participates in FAD binding. A glutathione-binding site is contributed by R333. V358 provides a ligand contact to NADP(+). K410 is a glutathione binding site. Residue H457 coordinates FAD. The active-site Proton acceptor is the H457.

This sequence belongs to the class-I pyridine nucleotide-disulfide oxidoreductase family. Homodimer. FAD is required as a cofactor.

The protein localises to the cytoplasm. It localises to the mitochondrion. The catalysed reaction is 2 glutathione + NADP(+) = glutathione disulfide + NADPH + H(+). In terms of biological role, catalyzes the reduction of glutathione disulfide (GSSG) to reduced glutathione (GSH). Constitutes the major mechanism to maintain a high GSH:GSSG ratio in the cytosol. The chain is Glutathione reductase (gtr-1) from Neurospora crassa (strain ATCC 24698 / 74-OR23-1A / CBS 708.71 / DSM 1257 / FGSC 987).